A 246-amino-acid polypeptide reads, in one-letter code: Pyridoxine 5'-phosphate synthase (246 aa).

N12 provides a ligand contact to 3-amino-2-oxopropyl phosphate. 14–15 (DH) contacts 1-deoxy-D-xylulose 5-phosphate. Residue R23 participates in 3-amino-2-oxopropyl phosphate binding. H48 acts as the Proton acceptor in catalysis. 2 residues coordinate 1-deoxy-D-xylulose 5-phosphate: R50 and H55. E75 acts as the Proton acceptor in catalysis. Residue T105 participates in 1-deoxy-D-xylulose 5-phosphate binding. H196 acts as the Proton donor in catalysis. Residues G197 and 218-219 (GH) contribute to the 3-amino-2-oxopropyl phosphate site.

Belongs to the PNP synthase family. Homooctamer; tetramer of dimers.

Its subcellular location is the cytoplasm. It carries out the reaction 3-amino-2-oxopropyl phosphate + 1-deoxy-D-xylulose 5-phosphate = pyridoxine 5'-phosphate + phosphate + 2 H2O + H(+). It participates in cofactor biosynthesis; pyridoxine 5'-phosphate biosynthesis; pyridoxine 5'-phosphate from D-erythrose 4-phosphate: step 5/5. Functionally, catalyzes the complicated ring closure reaction between the two acyclic compounds 1-deoxy-D-xylulose-5-phosphate (DXP) and 3-amino-2-oxopropyl phosphate (1-amino-acetone-3-phosphate or AAP) to form pyridoxine 5'-phosphate (PNP) and inorganic phosphate. This Pseudomonas putida (strain ATCC 47054 / DSM 6125 / CFBP 8728 / NCIMB 11950 / KT2440) protein is Pyridoxine 5'-phosphate synthase.